Consider the following 897-residue polypeptide: Alanine--tRNA ligase (897 aa).

Zn(2+) is bound by residues His-581, His-585, Cys-684, and His-688.

It belongs to the class-II aminoacyl-tRNA synthetase family. Requires Zn(2+) as cofactor.

Its subcellular location is the cytoplasm. It carries out the reaction tRNA(Ala) + L-alanine + ATP = L-alanyl-tRNA(Ala) + AMP + diphosphate. Functionally, catalyzes the attachment of alanine to tRNA(Ala) in a two-step reaction: alanine is first activated by ATP to form Ala-AMP and then transferred to the acceptor end of tRNA(Ala). Also edits incorrectly charged Ser-tRNA(Ala) and Gly-tRNA(Ala) via its editing domain. The protein is Alanine--tRNA ligase of Mycobacterium sp. (strain JLS).